We begin with the raw amino-acid sequence, 252 residues long: Type III pantothenate kinase (252 aa).

Position 6–13 (6–13) interacts with ATP; the sequence is DIGNTNTV. Residue 105–108 participates in substrate binding; that stretch reads GADR. Asp107 (proton acceptor) is an active-site residue. Residue Asp127 coordinates K(+). Residue Thr130 coordinates ATP. Thr182 lines the substrate pocket.

This sequence belongs to the type III pantothenate kinase family. Homodimer. The cofactor is NH4(+). Requires K(+) as cofactor.

The protein localises to the cytoplasm. It carries out the reaction (R)-pantothenate + ATP = (R)-4'-phosphopantothenate + ADP + H(+). The protein operates within cofactor biosynthesis; coenzyme A biosynthesis; CoA from (R)-pantothenate: step 1/5. In terms of biological role, catalyzes the phosphorylation of pantothenate (Pan), the first step in CoA biosynthesis. The protein is Type III pantothenate kinase of Salinispora arenicola (strain CNS-205).